We begin with the raw amino-acid sequence, 208 residues long: MSTVVVKGNVNGGVQQPRRRRRQSLRRRANRVQPVVMVTAPGQPRRRRRRRGGNRRSRRTGVPRGRGSSETFVFTKDNLVGNSQGSFTFGPSLSDCPAFKDGILKAYHEYKITSILLQFVSEASSTSSGSIAYELDPHCKVSSLQSYVNKFQITKGGAKTYQARMINGVEWHDSSEDQCRILWKGNGKSSDPAGSFRVTIRVALQNPK.

Positions 1-16 are enriched in low complexity; sequence MSTVVVKGNVNGGVQQ. A disordered region spans residues 1–69; the sequence is MSTVVVKGNV…TGVPRGRGSS (69 aa). Basic residues-rich tracts occupy residues 17–30 and 44–61; these read PRRRRRQSLRRRAN and PRRRRRRRGGNRRSRRTG.

The protein belongs to the luteoviruses capsid protein family.

The protein resides in the virion. Its function is as follows. Major capsid protein that self-assembles to form an icosahedral capsid with a T=3 symmetry, about 23 nm in diameter, and consisting of 180 capsid proteins monomers. Most of the 180 monomers are the major capsid protein, but a small percentage contain the minor capsid protein, which has a long C-terminal extension. The protein is Major capsid protein of Solanum tuberosum (Potato).